Consider the following 27-residue polypeptide: Cupiennin-3d (27 aa).

A Glutamic acid 1-amide modification is found at glutamate 27.

In terms of tissue distribution, expressed by the venom gland.

The protein localises to the secreted. In Cupiennius salei (American wandering spider), this protein is Cupiennin-3d.